The chain runs to 341 residues: Guanine nucleotide-binding protein subunit beta (341 aa).

7 WD repeats span residues 54 to 93 (GHLAKIYAMHWASDSRNLVSASQDGKLIVWDGYTTNKVHA), 96 to 135 (LRSSWVMTCAYAPSGSYVACGGLDNICSIYSLKTREGNVR), 142 to 180 (GHTGYLSCCRFLDDNQIVTSSGDMSCALWDIETGQQTTA), 183 to 222 (GHTGDVMSLSLSPDMRTFVSGACDASAKLWDIRDGMCKQT), 225 to 264 (GHESDINAITYFPNGYAFATGSDDATCRLFDIRADQEIGM), 269 to 308 (NIICGITSVAFSKSGRLLLGGYDDFNCNVWDVLRQERAGV), and 311 to 341 (GHDNRVSCLGVTEDGMAVATGSWDSFLRIWN).

It belongs to the WD repeat G protein beta family. As to quaternary structure, g proteins are composed of 3 units, alpha, beta and gamma. The G protein beta1-gamma2 dimer interacts with calmodulin. As to expression, abundantly expressed in gills, gonad and mantle and at lower levels in digestion gland. Not detected in muscle.

It localises to the cytoplasm. Guanine nucleotide-binding proteins (G proteins) are involved as a modulator or transducer in various transmembrane signaling systems. The beta and gamma chains are required for the GTPase activity, for replacement of GDP by GTP, and for G protein-effector interaction. This chain is Guanine nucleotide-binding protein subunit beta, found in Pinctada fucata (Akoya pearl oyster).